We begin with the raw amino-acid sequence, 333 residues long: Autoinducer 2 import system permease protein LsrC (333 aa).

The next 9 helical transmembrane spans lie at 14-34 (LIAI…YFSL), 39-59 (LVFS…LVML), 70-90 (IAGL…SLSV), 93-113 (LLTL…VTWL), 115-135 (IPAI…MLLL), 157-177 (LNIS…AWIL), 206-226 (IQII…IVFA), 252-272 (GISL…AFFL), and 284-304 (LPAW…LIFD).

Belongs to the binding-protein-dependent transport system permease family. AraH/RbsC subfamily. In terms of assembly, the complex is composed of two ATP-binding proteins (LsrA), two transmembrane proteins (LsrC and LsrD) and a solute-binding protein (LsrB).

Its subcellular location is the cell inner membrane. Functionally, part of the ABC transporter complex LsrABCD involved in autoinducer 2 (AI-2) import. Probably responsible for the translocation of the substrate across the membrane. This chain is Autoinducer 2 import system permease protein LsrC (lsrC), found in Photorhabdus laumondii subsp. laumondii (strain DSM 15139 / CIP 105565 / TT01) (Photorhabdus luminescens subsp. laumondii).